Consider the following 115-residue polypeptide: Biotrophy-associated secreted protein 1 (115 aa).

Positions 1–22 (MHVFNFAALFTVLATFTATAAA) are cleaved as a signal peptide. The tract at residues 24–115 (DQGSNTFDQR…GIRRVENYYP (92 aa)) is disordered. Composition is skewed to basic and acidic residues over residues 46-55 (IREEKQENVG) and 91-115 (QQKERAERKQDRGLNGIRRVENYYP).

Its subcellular location is the secreted. The protein resides in the host cytoplasm. In terms of biological role, secreted effector involved in biotrophic colonization of plant cells. Induces an early, basal defense response in susceptible rice, including rapid callose deposition and ROS production in leaves and calli. Also promotes sporulation and mycelia growth suggesting a role across the whole process of interaction, from the biotrophic phase to sporulation. This is Biotrophy-associated secreted protein 1 from Pyricularia oryzae (strain 70-15 / ATCC MYA-4617 / FGSC 8958) (Rice blast fungus).